The chain runs to 360 residues: POU domain, class 5, transcription factor 1 (360 aa).

2 disordered regions span residues 1–52 (MAGH…PGVG) and 88–114 (GGLE…SPEP). A 9aaTAD motif is present at residues 4-12 (HLASDFAFS). Ser111 bears the Phosphoserine; by MAPK mark. Lys123 participates in a covalent cross-link: Glycyl lysine isopeptide (Lys-Gly) (interchain with G-Cter in SUMO). Positions 138-212 (DIKALQKELE…LLQKWVEEAD (75 aa)) constitute a POU-specific domain. 2 residues coordinate DNA: Arg157 and Gln164. DNA-binding stretches follow at residues 180 to 186 (SQTTICR) and 193 to 196 (SFKN). Residues 230-289 (RKRKRTSIENRVRGNLENLFLQCPKPTLQQISHIAQQLGLEKDVVRVWFCNRRQKGKRSS) constitute a DNA-binding region (homeobox). At Thr235 the chain carries Phosphothreonine. Phosphoserine occurs at positions 236, 289, 290, and 355.

This sequence belongs to the POU transcription factor family. Class-5 subfamily. Interacts with PKM. Interacts with WWP2. Interacts with UBE2I and ZSCAN10. Interacts with PCGF1. Interacts with ESRRB; recruits ESRRB near the POU5F1-SOX2 element in the NANOG proximal promoter; the interaction is DNA independent. Interacts with ZNF322. Interacts with MAPK8 and MAPK9; the interaction allows MAPK8 and MAPK9 to phosphorylate POU5F1 on Ser-355. Interacts (when phosphorylated on Ser-355) with FBXW8. Interacts with FBXW4. Interacts with SOX2 and SOX15; binds synergistically with either SOX2 or SOX15 to DNA. Interacts with DDX56. Sumoylation enhances the protein stability, DNA binding and transactivation activity. Sumoylation is required for enhanced YES1 expression. Post-translationally, ubiquitinated; undergoes 'Lys-63'-linked polyubiquitination by WWP2 leading to proteasomal degradation. In terms of processing, ERK1/2-mediated phosphorylation at Ser-111 promotes nuclear exclusion and proteasomal degradation. Phosphorylation at Thr-235 and Ser-236 decrease DNA-binding and alters ability to activate transcription. In terms of tissue distribution, expressed in developing brain. Highest levels found in specific cell layers of the cortex, the olfactory bulb, the hippocampus and the cerebellum. Low levels of expression in adult tissues.

It localises to the cytoplasm. The protein resides in the nucleus. In terms of biological role, transcription factor that binds to the octamer motif (5'-ATTTGCAT-3'). Forms a trimeric complex with SOX2 or SOX15 on DNA and controls the expression of a number of genes involved in embryonic development such as YES1, FGF4, UTF1 and ZFP206. Critical for early embryogenesis and for embryonic stem cell pluripotency. The polypeptide is POU domain, class 5, transcription factor 1 (POU5F1) (Homo sapiens (Human)).